Here is a 471-residue protein sequence, read N- to C-terminus: Serine/threonine-protein kinase sid1 (471 aa).

The Protein kinase domain occupies 9–260 (YTLLRKLGSG…AKELLQHPFI (252 aa)). ATP-binding positions include 15–23 (LGSGSFGVV) and K38. Catalysis depends on D129, which acts as the Proton acceptor.

This sequence belongs to the protein kinase superfamily. STE Ser/Thr protein kinase family. STE20 subfamily. Interacts with cdc14.

The protein localises to the cytoplasm. It localises to the cytoskeleton. Its subcellular location is the microtubule organizing center. It is found in the spindle pole body. The enzyme catalyses L-seryl-[protein] + ATP = O-phospho-L-seryl-[protein] + ADP + H(+). It carries out the reaction L-threonyl-[protein] + ATP = O-phospho-L-threonyl-[protein] + ADP + H(+). Functionally, has a role in the septation initiation network (SIN) required for cytokinesis. The protein is Serine/threonine-protein kinase sid1 (sid1) of Schizosaccharomyces pombe (strain 972 / ATCC 24843) (Fission yeast).